Reading from the N-terminus, the 511-residue chain is Vicilin-like seed storage protein At2g28490 (511 aa).

A signal peptide spans 1 to 27 (MEKNKRAIGFLLLVVLINGVMMTRSNG). A disordered region spans residues 54–81 (GGGGGGAWGGEGEGGGEWGGGGEGGGGG). Cupin type-1 domains are found at residues 86 to 238 (FMMR…PELQ) and 329 to 480 (YNIY…ETMR). Asparagine 231, asparagine 369, asparagine 403, and asparagine 464 each carry an N-linked (GlcNAc...) asparagine glycan.

It belongs to the 7S seed storage protein family.

Functionally, seed storage protein. The protein is Vicilin-like seed storage protein At2g28490 of Arabidopsis thaliana (Mouse-ear cress).